The sequence spans 258 residues: F-box/SPRY domain-containing protein 1 (258 aa).

The region spanning 6-54 (TEYAPDIPDNVLELIFSYLKLQDLRNCALVCKSWHRFLSDENNEVWRAQ) is the F-box domain. The region spanning 64 to 256 (FKTDLLSVVP…ISMVYLGPPL (193 aa)) is the B30.2/SPRY domain.

The protein belongs to the FBXO45/Fsn family. As to quaternary structure, component of an E3 ubiquitin ligase complex composed of hiw and Fsn.

It localises to the synapse. It functions in the pathway protein modification; protein ubiquitination. In terms of biological role, required in the presynaptic motoneuron to down-regulate the levels of wnd and restrain synaptic terminal growth at the neuromuscular junction (NMJ). In Culex quinquefasciatus (Southern house mosquito), this protein is F-box/SPRY domain-containing protein 1.